Reading from the N-terminus, the 559-residue chain is O-fucosyltransferase 37 (559 aa).

A helical; Signal-anchor for type II membrane protein transmembrane segment spans residues 53 to 73; it reads FFLLLISLSLVFSGISFLTFS. N-linked (GlcNAc...) asparagine glycosylation occurs at N126. 331 to 333 provides a ligand contact to substrate; the sequence is HLR. N-linked (GlcNAc...) asparagine glycans are attached at residues N372, N403, N447, and N504.

Belongs to the glycosyltransferase GT106 family.

It localises to the membrane. It functions in the pathway glycan metabolism. This chain is O-fucosyltransferase 37, found in Arabidopsis thaliana (Mouse-ear cress).